Consider the following 336-residue polypeptide: Myb family transcription factor PHL8 (336 aa).

Residues 31–91 (TDAKPRLKWT…HLQKYRLGKS (61 aa)) enclose the HTH myb-type domain. Residues 62 to 87 (PKGLMKVMEIPGLTLYHLKSHLQKYR) constitute a DNA-binding region (H-T-H motif). Residues 100-134 (EVSSASENQEVESKNDSRDLRGCSVTEENSNPAKE) form a disordered region. The span at 110-120 (VESKNDSRDLR) shows a compositional bias: basic and acidic residues. Residues 139-159 (TEALQMQMEVQKKLHEQIEVQ) are a coiled coil. Positions 152 to 157 (LHEQIE) match the LHEQLE motif.

It belongs to the MYB-CC family.

The protein localises to the nucleus. The polypeptide is Myb family transcription factor PHL8 (Arabidopsis thaliana (Mouse-ear cress)).